The following is a 295-amino-acid chain: N-acetylmuramic acid 6-phosphate etherase (295 aa).

The SIS domain occupies 55–218 (AADALKQGGR…STGAMVKLGK (164 aa)). The active-site Proton donor is Glu-83. Glu-114 is a catalytic residue.

It belongs to the GCKR-like family. MurNAc-6-P etherase subfamily. In terms of assembly, homodimer.

It carries out the reaction N-acetyl-D-muramate 6-phosphate + H2O = N-acetyl-D-glucosamine 6-phosphate + (R)-lactate. The protein operates within amino-sugar metabolism; 1,6-anhydro-N-acetylmuramate degradation. It participates in amino-sugar metabolism; N-acetylmuramate degradation. Its pathway is cell wall biogenesis; peptidoglycan recycling. Functionally, specifically catalyzes the cleavage of the D-lactyl ether substituent of MurNAc 6-phosphate, producing GlcNAc 6-phosphate and D-lactate. Together with AnmK, is also required for the utilization of anhydro-N-acetylmuramic acid (anhMurNAc) either imported from the medium or derived from its own cell wall murein, and thus plays a role in cell wall recycling. This chain is N-acetylmuramic acid 6-phosphate etherase, found in Yersinia pseudotuberculosis serotype O:1b (strain IP 31758).